A 625-amino-acid polypeptide reads, in one-letter code: Glucose dehydrogenase [FAD, quinone] (625 aa).

Positions 1–42 (MATSPSSCDCLVGVPTGPTLASTCGGSAFMLFMGLLEVFIRS) are cleaved as a signal peptide. FAD is bound at residue 66-95 (DFIVIGGGSAGSVVASRLSEVPQWKVLLIE). The Proton acceptor role is filled by His544. Residue Sec613 is a non-standard amino acid, selenocysteine.

The protein belongs to the GMC oxidoreductase family. FAD serves as cofactor.

Its subcellular location is the secreted. The enzyme catalyses a quinone + D-glucose = D-glucono-1,5-lactone + a quinol. The protein is Glucose dehydrogenase [FAD, quinone] (Gld) of Drosophila pseudoobscura pseudoobscura (Fruit fly).